A 453-amino-acid polypeptide reads, in one-letter code: Ribosomal protein uS12 methylthiotransferase RimO (453 aa).

The MTTase N-terminal domain maps to 5 to 120 (PKVGFVSLGC…VMQAVHSHLP (116 aa)). [4Fe-4S] cluster contacts are provided by Cys-14, Cys-50, Cys-79, Cys-151, Cys-155, and Cys-158. In terms of domain architecture, Radical SAM core spans 137–382 (LTPRHYAYLK…MEVAEEVSAR (246 aa)). Positions 385-453 (QRKVGKTLKV…ADGHDLWGEV (69 aa)) constitute a TRAM domain.

The protein belongs to the methylthiotransferase family. RimO subfamily. Requires [4Fe-4S] cluster as cofactor.

Its subcellular location is the cytoplasm. It carries out the reaction L-aspartate(89)-[ribosomal protein uS12]-hydrogen + (sulfur carrier)-SH + AH2 + 2 S-adenosyl-L-methionine = 3-methylsulfanyl-L-aspartate(89)-[ribosomal protein uS12]-hydrogen + (sulfur carrier)-H + 5'-deoxyadenosine + L-methionine + A + S-adenosyl-L-homocysteine + 2 H(+). Its function is as follows. Catalyzes the methylthiolation of an aspartic acid residue of ribosomal protein uS12. The chain is Ribosomal protein uS12 methylthiotransferase RimO from Burkholderia vietnamiensis (strain G4 / LMG 22486) (Burkholderia cepacia (strain R1808)).